A 402-amino-acid chain; its full sequence is Acetate kinase (402 aa).

A Mg(2+)-binding site is contributed by asparagine 7. Lysine 14 is a binding site for ATP. Arginine 95 serves as a coordination point for substrate. Aspartate 152 acts as the Proton donor/acceptor in catalysis. ATP is bound by residues 212–216 (HLGNG), 286–288 (DMR), and 334–338 (GIGEN). Glutamate 388 contributes to the Mg(2+) binding site.

This sequence belongs to the acetokinase family. As to quaternary structure, homodimer. Requires Mg(2+) as cofactor. It depends on Mn(2+) as a cofactor.

The protein localises to the cytoplasm. It catalyses the reaction acetate + ATP = acetyl phosphate + ADP. Its pathway is metabolic intermediate biosynthesis; acetyl-CoA biosynthesis; acetyl-CoA from acetate: step 1/2. Functionally, catalyzes the formation of acetyl phosphate from acetate and ATP. Can also catalyze the reverse reaction. The sequence is that of Acetate kinase from Nitratidesulfovibrio vulgaris (strain DP4) (Desulfovibrio vulgaris).